Here is a 202-residue protein sequence, read N- to C-terminus: Ribosome maturation factor RimM (202 aa).

In terms of domain architecture, PRC barrel spans 121-202; it reads ADEYYWVDLI…CITVDWQPDY (82 aa).

This sequence belongs to the RimM family. In terms of assembly, binds ribosomal protein uS19.

It localises to the cytoplasm. An accessory protein needed during the final step in the assembly of 30S ribosomal subunit, possibly for assembly of the head region. Essential for efficient processing of 16S rRNA. May be needed both before and after RbfA during the maturation of 16S rRNA. It has affinity for free ribosomal 30S subunits but not for 70S ribosomes. This Polaromonas naphthalenivorans (strain CJ2) protein is Ribosome maturation factor RimM.